We begin with the raw amino-acid sequence, 144 residues long: MRLNTLSPAEGSKKAGKRLGRGIGSGLGKTGGRGHKGQNSRSGGGVRRGFEGGQMPLYRRLPKFGFTSRKSAITAEIRLSDLAKVEGGVVDLNTLKAANIIGIQIEFAKVILAGEVSTPVTVRGLRVSKGARAAIEAAGGTIEE.

The disordered stretch occupies residues 1-54; the sequence is MRLNTLSPAEGSKKAGKRLGRGIGSGLGKTGGRGHKGQNSRSGGGVRRGFEGGQ. The segment covering 21–31 has biased composition (gly residues); it reads RGIGSGLGKTG.

This sequence belongs to the universal ribosomal protein uL15 family. Part of the 50S ribosomal subunit.

Its function is as follows. Binds to the 23S rRNA. The sequence is that of Large ribosomal subunit protein uL15 from Enterobacter sp. (strain 638).